Here is a 78-residue protein sequence, read N- to C-terminus: MATRSVLLALVVLNLLFYVPPGRSGPNVYIQKIFASCWRLQGTCRPKCLKNETISYFGVILYICGCVNPKYLPILTGK.

The first 24 residues, 1 to 24 (MATRSVLLALVVLNLLFYVPPGRS), serve as a signal peptide directing secretion. 2 disulfide bridges follow: cysteine 37–cysteine 64 and cysteine 48–cysteine 66.

This sequence belongs to the beta-defensin family.

The protein localises to the secreted. Has antibacterial activity. This chain is Beta-defensin 135 (DEFB135), found in Pan troglodytes (Chimpanzee).